The chain runs to 804 residues: Endoplasmin (804 aa).

Positions 1-21 are cleaved as a signal peptide; it reads MRALWVLGLCCVLLTFGSVRA. The SRT pseudosubstrate motif motif lies at 42-44; that stretch reads SRT. Asn62 carries an N-linked (GlcNAc...) asparagine glycan. Position 64 is a phosphoserine (Ser64). N-linked (GlcNAc...) asparagine glycosylation occurs at Asn107. Asn107, Asp149, and Asn162 together coordinate ATP. Lys168 carries the post-translational modification N6-(2-hydroxyisobutyryl)lysine. A Phosphoserine modification is found at Ser172. Phe199 contacts ATP. Asn217 carries N-linked (GlcNAc...) asparagine glycosylation. Residues 288 to 323 are disordered; that stretch reads TVEEPAEEEEAAKEDKEESDDEAAVEEEEDEKKPKT. Acidic residues predominate over residues 289-317; sequence VEEPAEEEEAAKEDKEESDDEAAVEEEED. A phosphoserine mark is found at Ser306 and Ser403. Lys404 is modified (N6-succinyllysine). Asn445 is a glycosylation site (N-linked (GlcNAc...) asparagine). Residue Ser447 is modified to Phosphoserine. Lys479 carries the N6-acetyllysine modification. N-linked (GlcNAc...) asparagine glycans are attached at residues Asn481 and Asn502. Lys633 is modified (N6-succinyllysine). Residues 750–804 are disordered; the sequence is DPDAKVEEEPEEEPEETTEDTAEDTEQDEEEEMDAGTDEEEQETAEKSTAEKDEL. Residues 757–792 show a composition bias toward acidic residues; it reads EEPEEEPEETTEDTAEDTEQDEEEEMDAGTDEEEQE. Thr786 carries the post-translational modification Phosphothreonine. Over residues 793-804 the composition is skewed to basic and acidic residues; the sequence is TAEKSTAEKDEL. The short motif at 801–804 is the Prevents secretion from ER element; that stretch reads KDEL.

This sequence belongs to the heat shock protein 90 family. As to quaternary structure, homodimer; disulfide-linked. Component of an EIF2 complex at least composed of CELF1/CUGBP1, CALR, CALR3, EIF2S1, EIF2S2, HSP90B1 and HSPA5. Part of a large chaperone multiprotein complex comprising DNAJB11, HSP90B1, HSPA5, HYOU, PDIA2, PDIA4, PDIA6, PPIB, SDF2L1, UGGT1 and very small amounts of ERP29, but not, or at very low levels, CALR nor CANX. Interacts with AIMP1; regulates its retention in the endoplasmic reticulum. Hyperglycosylated form interacts with OS9; promoting its degradation by the endoplasmic reticulum associated degradation (ERAD). Interacts with CNPY3. This interaction is disrupted in the presence of ATP. Interacts with TLR4 and TLR9, but not with TLR3. Interacts with MZB1 in a calcium-dependent manner. Interacts with METTL23. Interacts with IL1B; the interaction facilitates cargo translocation into the ERGIC. Interacts with EIF2AK3. Phosphorylated by CK2. In terms of processing, N-glycosylated cotranslationally at Asn-217 by STT3A-containing OST-A complex: this glycosylation is constitutive. In response to various stress, 5 additional facultative sites (Asn-62, Asn-107, Asn-445, Asn-481 and Asn-502) can be glycosylated post-translationally by STT3B-containing OST-B complex, leading to a hyperglycosylated form that is degraded by the ER-associated degradation (ERAD) pathway. In normal conditions, the OST-A complex together with CCDC134 prevent glycosylation at facultative sites during protein folding, thereby preventing hyperglycosylation. Mechanistically, nascent HSP90B1 is tethered during translation to a specialized CCDC134-containing translocon that forms a microenvironment for its folding, in which STT3A associates with the SRT pseudosubstrate motif, and prevents access to facultative glycosylation sites until folding is completed, rendering its facultative sites inaccessible to the OST-B complex.

The protein localises to the endoplasmic reticulum lumen. It localises to the sarcoplasmic reticulum lumen. It is found in the melanosome. The enzyme catalyses ATP + H2O = ADP + phosphate + H(+). ATP-dependent chaperone involved in the processing of proteins in the endoplasmic reticulum, regulating their transport. Together with MESD, acts as a modulator of the Wnt pathway by promoting the folding of LRP6, a coreceptor of the canonical Wnt pathway. When associated with CNPY3, required for proper folding of Toll-like receptors. Promotes folding and trafficking of TLR4 to the cell surface. May participate in the unfolding of cytosolic leaderless cargos (lacking the secretion signal sequence) such as the interleukin 1/IL-1 to facilitate their translocation into the ERGIC (endoplasmic reticulum-Golgi intermediate compartment) and secretion; the translocation process is mediated by the cargo receptor TMED10. The sequence is that of Endoplasmin (HSP90B1) from Bos taurus (Bovine).